We begin with the raw amino-acid sequence, 91 residues long: Large ribosomal subunit protein uL23 (91 aa).

It belongs to the universal ribosomal protein uL23 family. As to quaternary structure, part of the 50S ribosomal subunit. Contacts protein L29, and trigger factor when it is bound to the ribosome.

In terms of biological role, one of the early assembly proteins it binds 23S rRNA. One of the proteins that surrounds the polypeptide exit tunnel on the outside of the ribosome. Forms the main docking site for trigger factor binding to the ribosome. The protein is Large ribosomal subunit protein uL23 of Macrococcus caseolyticus (strain JCSC5402) (Macrococcoides caseolyticum).